Reading from the N-terminus, the 252-residue chain is Uracil-DNA glycosylase (252 aa).

Catalysis depends on aspartate 87, which acts as the Proton acceptor.

It belongs to the uracil-DNA glycosylase (UDG) superfamily. UNG family.

It is found in the host nucleus. It carries out the reaction Hydrolyzes single-stranded DNA or mismatched double-stranded DNA and polynucleotides, releasing free uracil.. Functionally, excises uracil residues from the DNA which can arise as a result of misincorporation of dUMP residues by DNA polymerase or deamination of cytosines. Therefore may reduce deleterious uracil incorporation into the viral genome, particularly in terminally differentiated cells which lack DNA repair enzymes. The chain is Uracil-DNA glycosylase (46) from Alcelaphine herpesvirus 1 (strain C500) (AlHV-1).